A 166-amino-acid chain; its full sequence is Small ribosomal subunit protein uS9 (166 aa).

Acidic residues predominate over residues 1–16 (MSDTTNEVEETYEVDE). The tract at residues 1–45 (MSDTTNEVEETYEVDEQGIAYSSESAPSADAPLRPATIAPANATG) is disordered.

This sequence belongs to the universal ribosomal protein uS9 family.

The protein is Small ribosomal subunit protein uS9 of Nocardioides sp. (strain ATCC BAA-499 / JS614).